The sequence spans 526 residues: Probable inorganic phosphate transporter 1-3 (526 aa).

Residues 1–21 (MADGQLKVLTTLDHARTQWYH) are Cytoplasmic-facing. The chain crosses the membrane as a helical span at residues 22-42 (FMAIVIAGMGFFTDAYDLFCI). The Extracellular portion of the chain corresponds to 43–70 (SLVSKLLGRIYYTDLAGDNPGSLPPNVS). Residues 71–91 (AAVNGVALCGTLAGQLFFGWL) form a helical membrane-spanning segment. Residues 92–99 (GDKLGRKS) are Cytoplasmic-facing. A helical transmembrane segment spans residues 100–120 (VYGFTLVLMVVCSVASGLSFG). At 121 to 124 (RTAK) the chain is on the extracellular side. The chain crosses the membrane as a helical span at residues 125–145 (GVVATLCFFRFWLGFGIGGDY). Residues 146–163 (PLSATIMSEYANKRTRGA) are Cytoplasmic-facing. The helical transmembrane segment at 164–184 (FIAAVFAMQGFGILFGAIVAL) threads the bilayer. Residues 185-211 (VVSAGFRNAYPAPSYADGRAASLVPEA) lie on the Extracellular side of the membrane. Residues 212 to 232 (DYVWRIILMFGTVPAALTYYW) traverse the membrane as a helical segment. Over 233–294 (RMKMPETARY…GLFSRQFVRR (62 aa)) the chain is Cytoplasmic. Residues 295–315 (HGVHLVATTSTWFLLDIAFYS) traverse the membrane as a helical segment. The Extracellular segment spans residues 316 to 349 (QNLFQKDIFSKVGWIPPARTMNAVEEVFRIARAQ). A helical membrane pass occupies residues 350–370 (ALIALCGTIPGYWFTVAFIDV). Over 371–373 (AGR) the chain is Cytoplasmic. A helical transmembrane segment spans residues 374 to 394 (FAIQLMGFAMMTVFMLGLAAP). Topologically, residues 395-407 (YHHWTTPGNHTGF) are extracellular. The helical transmembrane segment at 408–428 (VVMYGFTFFFANFGPNATTFI) threads the bilayer. Over 429–444 (VPAEIYPARLRSTCHG) the chain is Cytoplasmic. A helical transmembrane segment spans residues 445–465 (ISAAAGKAGAIVGAFGFLYAA). Topologically, residues 466–483 (QDPHKPEAGYKPGIGIRN) are extracellular. A helical membrane pass occupies residues 484-504 (ALFVLAGTNFLGMLMTLLVPE). Residues 505–526 (SKGMSLEEVSKENVADDEEATA) are Cytoplasmic-facing.

Belongs to the major facilitator superfamily. Phosphate:H(+) symporter (TC 2.A.1.9) family. As to expression, expressed at low levels in roots.

It localises to the membrane. High-affinity transporter for external inorganic phosphate. The sequence is that of Probable inorganic phosphate transporter 1-3 (PHT1-3) from Oryza sativa subsp. japonica (Rice).